A 939-amino-acid chain; its full sequence is MNWDTPIDLAAAGSPSALSHQSLRDNIELVEQLLRQVAAQEGGGDLVELLDRLWASHQDRTGEGLALIRELSLEKSVLAIRAFSIYFQLINIVEQHHERKRLRLQASFSADTAQPGSFCWLFDEMKSLGVSTPEIERVLQQLDVRLVFTAHPTEIVRRTIRTKHRRIVHLLDDLDNALSEWQQQQVHTTMLEEIRIWWRTDELHQVRPTVLDEVAHTVHYFEEVLFEAMPRVRSELVRCLDMFHPSLTRSLGTFCRFGSWVGSDRDGNPSVNALVTWKTACHQRSRVLAKYIKSVERLRDLLSLAEGNPPQDLLLALEQDQRDLGEVYERYSVVYLQEPYRLKLSYILERLEHTRERNAWLEVHGPQRLSQPDEPGWLHYYRHAHELLAELHLLRQCLRTTGIGCRPLETLIDQVEVFGFHLAGLDVRQDSTRHEDTLTEVSAKLRLTATPYAELDEQARLEWLVRELQTLRPLIPAELPFSARTEETIQTFRMIRRLQKEFGSEICHTYIISMSKQASDLLEVLLLAEEAGLFDPATGTGTLMVVPLFETVEDLRNAPHVLEQLFSLPLYRCYLTCHQNLQEVMLGYSDSNKDSGFLSSSWEIFLAQQHIQQVARRHGVQLRIFHGRGGTVGRGGGPSYQAILAQPDGTVSGRIKITEQGEVLASKYSLFELAAFNIETVTAAVIQASVLPTSPPGSRNWELRLQELSDVARRTYRQLVYEQEGFIDFFCHVTPIDEISQLQISSRPSRREGRRDLASLRAIPWVFSWTQSRFLLQAWYGLGTALDGFIRCNRERNLAELRSMYRQWPFFRTLISKVEMTLAKVDLQVAANYVQELLPKEHEHTGECIFALIAAELERTRECVLAITEHRQLLEDNPPLQRSIALRNATIAPLGYLQATLLKYLRYENRQPRSYSRNELLRGALLTINGIAAGMRNTG.

Residues His151 and Lys593 contribute to the active site.

The protein belongs to the PEPCase type 1 family. The cofactor is Mg(2+).

It carries out the reaction oxaloacetate + phosphate = phosphoenolpyruvate + hydrogencarbonate. Forms oxaloacetate, a four-carbon dicarboxylic acid source for the tricarboxylic acid cycle. This chain is Phosphoenolpyruvate carboxylase, found in Gloeobacter violaceus (strain ATCC 29082 / PCC 7421).